The chain runs to 611 residues: MRHTALLPLVSSFIVPALAQIPGQTTVNATVNQGRFGNATYDYVIVGGGTSGLAIAARLAEDPSLSVAVIEAGGYYELDGTVASIIPGLAAGANVGTDATEYSTVDWNFQAQPLTSANDRSLRYNRGKTLGGSSARHYMVYQRGTRGSYDQWAELTGDESWGWDSVFPYFQRSVNVTPANMTGRFPNTTVTYDPSGFNKAGGPLHVTWPNYGSPWSTWIEQGLEAIGILPDTDFNTGTLNGSSWAPITINPLSQKRDSSETSFLQQSLKTTNLTVYLHTMALKIGFDGTTASSVDVRSPVGRFTLSARREIIVSAGALQSPQLLMVSGIGPRETLERHGIPVVKELAGVGQKMWEHPFFGITHQVNLVTATELAINQQALLQALNQYKSQQGPLTSAGFGVLGWEKLPNSTLSDSTNEALATFPSDWPTIEYLSIDGYLNGWHSAADQATGNGQQWGTIAVALVAPLSRGNVTISSSDMDDPPVFDLGFLTHPADREIAVAAMRRIRQAFAAISEITIGDEVVPGADVSTDEELLDFIRESIVPVYHVAGTCAMGREDDPEAVVDPQARVIGVNNLRVVDASIFPTLPPGHPQSTCYMVAEKIADLIKKGN.

A signal peptide spans 1 to 19 (MRHTALLPLVSSFIVPALA). N-linked (GlcNAc...) asparagine glycosylation is found at Asn-28 and Asn-38. FAD is bound by residues 50 to 51 (TS), 71 to 72 (EA), and 137 to 140 (HYMV). 6 N-linked (GlcNAc...) asparagine glycosylation sites follow: Asn-180, Asn-187, Asn-240, Asn-272, Asn-409, and Asn-471. His-547 serves as the catalytic Proton acceptor. FAD-binding positions include Ala-581 and 592–593 (PQ).

The protein belongs to the GMC oxidoreductase family. The cofactor is FAD.

It functions in the pathway secondary metabolite biosynthesis. Dehydrogenase; part of the gene cluster that mediates the biosynthesis of aspernidine A, a prenylated isoindolinone. The starting point of the biosynthesis of aspernidin A is the production of orsellinaldehyde by the non-reducing polyketide synthase pkfA. Hydroxylation, methylation of one of the phenol groups, and prenylation, presumably catalyzed by the prenyltransferase pkfE, would be needed to yield aspernidine D. Subsequently, the cytochrome P450 monooxygenase pkfB is responsible for hydroxylation of aspernidine D to yield aspernidine E. The dehydrogenase pkfF may be responsible for further oxidation of aspernidine E to form a dialdehyde intermediate which is further transformed in a series of steps, some of which are enzyme-mediated, to generate aspernidine A. The possibility that additional enzymes outside of the cluster are involved in aspernidine A biosynthesis cannot be excluded. This Emericella nidulans (strain FGSC A4 / ATCC 38163 / CBS 112.46 / NRRL 194 / M139) (Aspergillus nidulans) protein is Dehydrogenase pkfF.